The primary structure comprises 276 residues: 1H-3-hydroxy-4-oxoquinaldine 2,4-dioxygenase (276 aa).

The 123-residue stretch at 28-150 (PAILLLPGWC…TLLKDPERWR (123 aa)) folds into the AB hydrolase-1 domain. Residues 36 to 38 (WCH), 100 to 101 (HS), and Trp-160 contribute to the substrate site. The active-site Proton donor/acceptor is His-251.

This sequence belongs to the AB hydrolase superfamily. None. Contrary to most other dioxygenases, this enzyme does not require a cofactor for catalysis. is required as a cofactor.

The catalysed reaction is 3-hydroxy-2-methyl-1H-quinolin-4-one + O2 = N-acetylanthranilate + CO + H(+). Its function is as follows. Ring-cleaving dioxygenase involved in quinaldine degradation and utilization. This Paenarthrobacter nitroguajacolicus (Arthrobacter nitroguajacolicus) protein is 1H-3-hydroxy-4-oxoquinaldine 2,4-dioxygenase (hod).